The sequence spans 358 residues: MGLNLTLTKLPGNELYSQASHTANSTSEGHGKNSTLHNKFDTIILPVLYLVIFVASILLNGLAVWIFFHIRNKTSFIFYLKNIVVADLIMTLTFPFRIVRDAGFGPWYFEFILCRYTSVLFYANMYTSIVFLGLISVDRYLKVVKPFGDSRMYSITFTKVLSVCVWVIMAILSLPNIILTNGQPTKENIHDCMKLKSPLGAKWHMAVTYVDSCLFVAVLVILIGCYIAISRYIHKSSRQFISQSSRKRKHNQSIRVVVAVFFTCFLPYHLCRIPFTFSNLDRLLDESAHKILYYCKEMTLFLSACNVCLDPIIYFFMCKSFSRRLFKKSNIRTRSESIRSLQSVRRSEVRIYYDYTDV.

The Extracellular portion of the chain corresponds to 1-47 (MGLNLTLTKLPGNELYSQASHTANSTSEGHGKNSTLHNKFDTIILPV). N-linked (GlcNAc...) asparagine glycans are attached at residues asparagine 4, asparagine 24, and asparagine 33. The chain crosses the membrane as a helical span at residues 48–68 (LYLVIFVASILLNGLAVWIFF). Over 69–75 (HIRNKTS) the chain is Cytoplasmic. A helical membrane pass occupies residues 76–96 (FIFYLKNIVVADLIMTLTFPF). The Extracellular segment spans residues 97–116 (RIVRDAGFGPWYFEFILCRY). Cysteine 114 and cysteine 192 are joined by a disulfide. A helical membrane pass occupies residues 117–137 (TSVLFYANMYTSIVFLGLISV). Residues 138 to 159 (DRYLKVVKPFGDSRMYSITFTK) are Cytoplasmic-facing. A helical membrane pass occupies residues 160 to 180 (VLSVCVWVIMAILSLPNIILT). The Extracellular portion of the chain corresponds to 181-208 (NGQPTKENIHDCMKLKSPLGAKWHMAVT). A helical transmembrane segment spans residues 209 to 229 (YVDSCLFVAVLVILIGCYIAI). At 230-256 (SRYIHKSSRQFISQSSRKRKHNQSIRV) the chain is on the cytoplasmic side. A helical transmembrane segment spans residues 257–277 (VVAVFFTCFLPYHLCRIPFTF). At 278–297 (SNLDRLLDESAHKILYYCKE) the chain is on the extracellular side. A helical transmembrane segment spans residues 298–318 (MTLFLSACNVCLDPIIYFFMC). Residues 319 to 358 (KSFSRRLFKKSNIRTRSESIRSLQSVRRSEVRIYYDYTDV) lie on the Cytoplasmic side of the membrane.

The protein belongs to the G-protein coupled receptor 1 family. Expressed at high levels in testis and brain and to a lesser extent placenta, ovary, prostate, and skeletal muscle but not in heart, lung, kidney, liver or intestine.

It localises to the cell membrane. Its function is as follows. Receptor for lysophosphatidic acid (LPA). Necessary for p53/TP53-dependent survival in response to DNA damage. Promotes the Hippo-YAP signaling pathway and thereby modulates glycolysis and oxidative stress production by the regulation of hexokinase-2/HK2. This is G-protein coupled receptor 87 (Gpr87) from Mus musculus (Mouse).